Here is a 36-residue protein sequence, read N- to C-terminus: Cytochrome b6-f complex subunit 7 (36 aa).

A helical transmembrane segment spans residues 5 to 25 (IFFVAGLVFVLTLVGMAIGFG).

This sequence belongs to the PetM family. The 4 large subunits of the cytochrome b6-f complex are cytochrome b6, subunit IV (17 kDa polypeptide, PetD), cytochrome f and the Rieske protein, while the 4 small subunits are PetG, PetL, PetM and PetN. The complex functions as a dimer.

Its subcellular location is the cell inner membrane. Component of the cytochrome b6-f complex, which mediates electron transfer between photosystem II (PSII) and photosystem I (PSI), cyclic electron flow around PSI, and state transitions. The polypeptide is Cytochrome b6-f complex subunit 7 (Gloeobacter violaceus (strain ATCC 29082 / PCC 7421)).